The chain runs to 139 residues: Prefoldin subunit alpha (139 aa).

Belongs to the prefoldin subunit alpha family. As to quaternary structure, heterohexamer of two alpha and four beta subunits.

The protein resides in the cytoplasm. In terms of biological role, molecular chaperone capable of stabilizing a range of proteins. Seems to fulfill an ATP-independent, HSP70-like function in archaeal de novo protein folding. The sequence is that of Prefoldin subunit alpha from Picrophilus torridus (strain ATCC 700027 / DSM 9790 / JCM 10055 / NBRC 100828 / KAW 2/3).